The primary structure comprises 487 residues: Acetyl-coenzyme A carboxylase carboxyl transferase subunit beta, chloroplastic (487 aa).

The 265-residue stretch at 223–487 folds into the CoA carboxyltransferase N-terminal domain; sequence LWIQCDNCYG…FFPLKKNEIK (265 aa). Zn(2+)-binding residues include cysteine 227, cysteine 230, cysteine 243, and cysteine 246. The segment at 227–246 adopts a C4-type zinc-finger fold; that stretch reads CDNCYGLMYKKVKMNVCEQC.

The protein belongs to the AccD/PCCB family. Acetyl-CoA carboxylase is a heterohexamer composed of biotin carboxyl carrier protein, biotin carboxylase and 2 subunits each of ACCase subunit alpha and ACCase plastid-coded subunit beta (accD). Requires Zn(2+) as cofactor.

Its subcellular location is the plastid. The protein resides in the chloroplast stroma. It catalyses the reaction N(6)-carboxybiotinyl-L-lysyl-[protein] + acetyl-CoA = N(6)-biotinyl-L-lysyl-[protein] + malonyl-CoA. It participates in lipid metabolism; malonyl-CoA biosynthesis; malonyl-CoA from acetyl-CoA: step 1/1. Component of the acetyl coenzyme A carboxylase (ACC) complex. Biotin carboxylase (BC) catalyzes the carboxylation of biotin on its carrier protein (BCCP) and then the CO(2) group is transferred by the transcarboxylase to acetyl-CoA to form malonyl-CoA. This chain is Acetyl-coenzyme A carboxylase carboxyl transferase subunit beta, chloroplastic, found in Lepidium virginicum (Virginia pepperweed).